The sequence spans 550 residues: Hydroxylamine reductase (550 aa).

The [2Fe-2S] cluster site is built by Cys-3, Cys-6, Cys-18, and Cys-25. 8 residues coordinate hybrid [4Fe-2O-2S] cluster: His-249, Glu-273, Cys-317, Cys-405, Cys-433, Cys-458, Glu-492, and Lys-494. Cys-405 is subject to Cysteine persulfide.

It belongs to the HCP family. [2Fe-2S] cluster is required as a cofactor. It depends on hybrid [4Fe-2O-2S] cluster as a cofactor.

Its subcellular location is the cytoplasm. The enzyme catalyses A + NH4(+) + H2O = hydroxylamine + AH2 + H(+). Functionally, catalyzes the reduction of hydroxylamine to form NH(3) and H(2)O. The polypeptide is Hydroxylamine reductase (Pectobacterium atrosepticum (strain SCRI 1043 / ATCC BAA-672) (Erwinia carotovora subsp. atroseptica)).